A 203-amino-acid chain; its full sequence is dATP triphosphohydrolase (203 aa).

Position 17 (R17) interacts with dATP. H31, H73, D74, E77, D82, and D130 together coordinate Co(2+).

Belongs to the Caudovirales dATP triphosphohydrolase family. Co(2+) is required as a cofactor.

It carries out the reaction dATP + H2O = 2'-deoxyadenosine + triphosphate + H(+). It catalyses the reaction dADP + H2O = 2'-deoxyadenosine + diphosphate. The enzyme catalyses dAMP + H2O = 2'-deoxyadenosine + phosphate. In terms of biological role, catalyzes the hydrolysis of dATP, dADP and dAMP into dA. This step is essential for Z-genome synthesis (containing aminoadenine instead of adenine). Specifically removes dATP and its precursor dADP from the nucleotide pool of the host, preventing the incorporation of A into the phage genome and favoring the integration of the Z-base into the viral genome. The polypeptide is dATP triphosphohydrolase (datZ) (Acinetobacter phage SH-Ab 15497).